The following is a 751-amino-acid chain: Proton-associated sugar transporter A (751 aa).

6 helical membrane-spanning segments follow: residues 93–113, 123–143, 155–175, 191–211, 233–253, and 268–288; these read ILFGIEFSYAMETAYVTPVLL, SLVWFISPILGFLLQPLLGAW, RPFILVLAIGALLGLSLLLNG, WGILLTVCGVVLMDFSADSAD, IHALMAGLGGGFGYVVGGIHW, and VIYVFTAITLSVTTVLTLISI. The residue at position 500 (Thr500) is a Phosphothreonine. 6 consecutive transmembrane segments (helical) span residues 536 to 556, 576 to 596, 606 to 626, 630 to 650, 688 to 708, and 710 to 730; these read GWLSFEGMLLFYTDFMGEVVF, VTMGCWGMCIYAFSAAFYSAI, VRTLYFIAYLAFGLGTGLATL, LYVVLSLCTTYGILFSTLCTL, FLAQILVSLVLGPLTSAVGSA, and GVMYFSSLVSFLGCLYSSLCV.

It belongs to the glycoside-pentoside-hexuronide (GPH) cation symporter transporter (TC 2.A.2) family.

It localises to the membrane. It carries out the reaction D-galactose(in) + H(+)(in) = D-galactose(out) + H(+)(out). It catalyses the reaction D-glucose(out) + H(+)(out) = D-glucose(in) + H(+)(in). In terms of biological role, proton-associated glucose transporter in the brain. The protein is Proton-associated sugar transporter A of Mus musculus (Mouse).